The primary structure comprises 229 residues: uncharacterized protein (229 aa).

The first 17 residues, 1–17 (MKKIIALMLFLTFFAHA), serve as a signal peptide directing secretion.

This is an uncharacterized protein from Escherichia coli O157:H7.